Reading from the N-terminus, the 150-residue chain is Large ribosomal subunit protein bL9 (150 aa).

It belongs to the bacterial ribosomal protein bL9 family.

Its function is as follows. Binds to the 23S rRNA. This chain is Large ribosomal subunit protein bL9, found in Hamiltonella defensa subsp. Acyrthosiphon pisum (strain 5AT).